Consider the following 437-residue polypeptide: ATP-dependent RNA helicase RhlB (437 aa).

Residues 9–37 (QKFADLGLKPQVTEGLEKKGFEYCTPIQA) carry the Q motif motif. The 180-residue stretch at 40–219 (LPVLLTGQDI…FEHMHNPEHV (180 aa)) folds into the Helicase ATP-binding domain. 53-60 (AQTGTGKT) contacts ATP. Positions 165–168 (DEAD) match the DEAD box motif. The 146-residue stretch at 245 to 390 (ALLQTLIEEE…VSDYDASALI (146 aa)) folds into the Helicase C-terminal domain. Positions 395–437 (APLRMRAPRTQQRRTNTGGTRSGNRKPQGRRPRQPRQSAPKQS) are disordered. The span at 403–413 (RTQQRRTNTGG) shows a compositional bias: low complexity. A compositionally biased stretch (basic residues) spans 417 to 428 (GNRKPQGRRPRQ).

This sequence belongs to the DEAD box helicase family. RhlB subfamily. Component of the RNA degradosome, which is a multiprotein complex involved in RNA processing and mRNA degradation.

It is found in the cytoplasm. It carries out the reaction ATP + H2O = ADP + phosphate + H(+). DEAD-box RNA helicase involved in RNA degradation. Has RNA-dependent ATPase activity and unwinds double-stranded RNA. This Vibrio campbellii (strain ATCC BAA-1116) protein is ATP-dependent RNA helicase RhlB.